Here is a 59-residue protein sequence, read N- to C-terminus: Small, acid-soluble spore protein H 2 (59 aa).

It belongs to the SspH family.

It is found in the spore core. This Bacillus anthracis protein is Small, acid-soluble spore protein H 2 (sspH2).